The primary structure comprises 414 residues: Multifunctional CCA protein (414 aa).

ATP is bound by residues Gly8 and Arg11. Residues Gly8 and Arg11 each coordinate CTP. Residues Glu21 and Asp23 each coordinate Mg(2+). ATP-binding residues include Arg91, Arg137, and Arg140. CTP contacts are provided by Arg91, Arg137, and Arg140. The region spanning 228–329 is the HD domain; it reads TGIHTLMTLA…LKLFDAIDVW (102 aa).

The protein belongs to the tRNA nucleotidyltransferase/poly(A) polymerase family. Bacterial CCA-adding enzyme type 1 subfamily. As to quaternary structure, monomer. Can also form homodimers and oligomers. Mg(2+) is required as a cofactor. It depends on Ni(2+) as a cofactor.

The enzyme catalyses a tRNA precursor + 2 CTP + ATP = a tRNA with a 3' CCA end + 3 diphosphate. The catalysed reaction is a tRNA with a 3' CCA end + 2 CTP + ATP = a tRNA with a 3' CCACCA end + 3 diphosphate. Its function is as follows. Catalyzes the addition and repair of the essential 3'-terminal CCA sequence in tRNAs without using a nucleic acid template. Adds these three nucleotides in the order of C, C, and A to the tRNA nucleotide-73, using CTP and ATP as substrates and producing inorganic pyrophosphate. tRNA 3'-terminal CCA addition is required both for tRNA processing and repair. Also involved in tRNA surveillance by mediating tandem CCA addition to generate a CCACCA at the 3' terminus of unstable tRNAs. While stable tRNAs receive only 3'-terminal CCA, unstable tRNAs are marked with CCACCA and rapidly degraded. This chain is Multifunctional CCA protein, found in Yersinia enterocolitica serotype O:8 / biotype 1B (strain NCTC 13174 / 8081).